Consider the following 266-residue polypeptide: 4-hydroxy-tetrahydrodipicolinate reductase (266 aa).

Gly-10 to Met-15 lines the NAD(+) pocket. Lys-38 provides a ligand contact to NADP(+). Residues Gly-99–Thr-101 and Ala-125–Phe-128 each bind NAD(+). His-155 serves as the catalytic Proton donor/acceptor. Position 156 (His-156) interacts with (S)-2,3,4,5-tetrahydrodipicolinate. The active-site Proton donor is the Lys-159. Residue Gly-165–Thr-166 coordinates (S)-2,3,4,5-tetrahydrodipicolinate.

The protein belongs to the DapB family.

It is found in the cytoplasm. The enzyme catalyses (S)-2,3,4,5-tetrahydrodipicolinate + NAD(+) + H2O = (2S,4S)-4-hydroxy-2,3,4,5-tetrahydrodipicolinate + NADH + H(+). It catalyses the reaction (S)-2,3,4,5-tetrahydrodipicolinate + NADP(+) + H2O = (2S,4S)-4-hydroxy-2,3,4,5-tetrahydrodipicolinate + NADPH + H(+). Its pathway is amino-acid biosynthesis; L-lysine biosynthesis via DAP pathway; (S)-tetrahydrodipicolinate from L-aspartate: step 4/4. Catalyzes the conversion of 4-hydroxy-tetrahydrodipicolinate (HTPA) to tetrahydrodipicolinate. In Bacillus cereus (strain ATCC 10987 / NRS 248), this protein is 4-hydroxy-tetrahydrodipicolinate reductase.